The primary structure comprises 467 residues: DNA repair protein RadA (467 aa).

Residues 10 to 27 (CQNCGAVHSRWAGKCDSC) form a C4-type zinc finger. Residue 98–105 (GDPGIGKS) coordinates ATP. Positions 260–264 (KNRFG) match the RadA KNRFG motif motif. A lon-protease-like region spans residues 359 to 467 (DVYLNVAGGY…RIAASGAGKK (109 aa)).

Belongs to the RecA family. RadA subfamily.

DNA-dependent ATPase involved in processing of recombination intermediates, plays a role in repairing DNA breaks. Stimulates the branch migration of RecA-mediated strand transfer reactions, allowing the 3' invading strand to extend heteroduplex DNA faster. Binds ssDNA in the presence of ADP but not other nucleotides, has ATPase activity that is stimulated by ssDNA and various branched DNA structures, but inhibited by SSB. Does not have RecA's homology-searching function. The protein is DNA repair protein RadA of Brucella abortus (strain 2308).